Reading from the N-terminus, the 343-residue chain is Anthranilate phosphoribosyltransferase (343 aa).

5-phospho-alpha-D-ribose 1-diphosphate contacts are provided by residues G84, 87–88, T92, 94–97, 112–120, and S124; these read GD, NIST, and KHGNRSVSS. An anthranilate-binding site is contributed by G84. A Mg(2+)-binding site is contributed by S96. Anthranilate is bound at residue N115. Residue R170 participates in anthranilate binding. D229 and E230 together coordinate Mg(2+).

The protein belongs to the anthranilate phosphoribosyltransferase family. In terms of assembly, homodimer. It depends on Mg(2+) as a cofactor.

It carries out the reaction N-(5-phospho-beta-D-ribosyl)anthranilate + diphosphate = 5-phospho-alpha-D-ribose 1-diphosphate + anthranilate. It functions in the pathway amino-acid biosynthesis; L-tryptophan biosynthesis; L-tryptophan from chorismate: step 2/5. In terms of biological role, catalyzes the transfer of the phosphoribosyl group of 5-phosphorylribose-1-pyrophosphate (PRPP) to anthranilate to yield N-(5'-phosphoribosyl)-anthranilate (PRA). The sequence is that of Anthranilate phosphoribosyltransferase from Stenotrophomonas maltophilia (strain K279a).